A 144-amino-acid chain; its full sequence is Large ribosomal subunit protein uL15 (144 aa).

The disordered stretch occupies residues 1–51 (MQLNTLSPAQGEKKSRKRVGRGIGSGIGKTCGSGHKGQKSRSGGFNKIGFE). Residues 21-35 (RGIGSGIGKTCGSGH) are compositionally biased toward gly residues.

Belongs to the universal ribosomal protein uL15 family. Part of the 50S ribosomal subunit.

Binds to the 23S rRNA. The polypeptide is Large ribosomal subunit protein uL15 (Vesicomyosocius okutanii subsp. Calyptogena okutanii (strain HA)).